Consider the following 129-residue polypeptide: Small ribosomal subunit protein uS11 (129 aa).

It belongs to the universal ribosomal protein uS11 family. Part of the 30S ribosomal subunit. Interacts with proteins S7 and S18. Binds to IF-3.

In terms of biological role, located on the platform of the 30S subunit, it bridges several disparate RNA helices of the 16S rRNA. Forms part of the Shine-Dalgarno cleft in the 70S ribosome. This Carboxydothermus hydrogenoformans (strain ATCC BAA-161 / DSM 6008 / Z-2901) protein is Small ribosomal subunit protein uS11.